The following is a 466-amino-acid chain: Alpha-1A adrenergic receptor (466 aa).

The Extracellular segment spans residues 1 to 27 (MVFLSGNASDSSNCTQPPAPVNISKAI). N-linked (GlcNAc...) asparagine glycans are attached at residues Asn-7, Asn-13, and Asn-22. The helical transmembrane segment at 28-51 (LLGVILGGLILFGVLGNILVILSV) threads the bilayer. Residues 52–64 (ACHRHLHSVTHYY) lie on the Cytoplasmic side of the membrane. A helical membrane pass occupies residues 65–88 (IVNLAVADLLLTSTVLPFSAIFEV). The Extracellular segment spans residues 89–99 (LGYWAFGRVFC). An intrachain disulfide couples Cys-99 to Cys-176. Residues 100–122 (NIWAAVDVLCCTASIMGLCIISI) form a helical membrane-spanning segment. The Cytoplasmic segment spans residues 123 to 143 (DRYIGVSYPLRYPTIVTQRRG). The helical transmembrane segment at 144-167 (LMALLCVWALSLVISIGPLFGWRQ) threads the bilayer. At 168–181 (PAPEDETICQINEE) the chain is on the extracellular side. A helical membrane pass occupies residues 182 to 205 (PGYVLFSALGSFYLPLAIILVMYC). Topologically, residues 206 to 273 (RVYVVAKRES…FSREKKAAKT (68 aa)) are cytoplasmic. Ser-215 carries the phosphoserine; by PKA modification. The chain crosses the membrane as a helical span at residues 274-297 (LGIVVGCFVLCWLPFFLVMPIGSF). The Extracellular segment spans residues 298–305 (FPDFKPSE). The chain crosses the membrane as a helical span at residues 306 to 329 (TVFKIVFWLGYLNSCINPIIYPCS). The Cytoplasmic segment spans residues 330 to 466 (SQEFKKAFQN…ISLSENGEEV (137 aa)). The Nuclear localization signal signature appears at 334–349 (KKAFQNVLRIQCLCRK). Residue Cys-345 is the site of S-palmitoyl cysteine attachment.

This sequence belongs to the G-protein coupled receptor 1 family. Adrenergic receptor subfamily. ADRA1A sub-subfamily. As to quaternary structure, homo- and heterooligomer. Heterooligomerizes with ADRA1B homooligomers in cardiac myocytes. Interacts with CAVIN4. C-terminal Ser or Thr residues may be phosphorylated. In terms of tissue distribution, expressed in heart, brain, liver and prostate, but not in kidney, lung, adrenal, aorta and pituitary. Within the prostate, expressed in the apex, base, periurethral and lateral lobe. Isoform 4 is the most abundant isoform expressed in the prostate with high levels also detected in liver and heart.

Its subcellular location is the nucleus membrane. The protein resides in the cell membrane. The protein localises to the cytoplasm. It localises to the membrane. It is found in the caveola. This alpha-adrenergic receptor mediates its action by association with G proteins that activate a phosphatidylinositol-calcium second messenger system. Its effect is mediated by G(q) and G(11) proteins. Nuclear ADRA1A-ADRA1B heterooligomers regulate phenylephrine(PE)-stimulated ERK signaling in cardiac myocytes. The sequence is that of Alpha-1A adrenergic receptor (ADRA1A) from Homo sapiens (Human).